Reading from the N-terminus, the 251-residue chain is Dehydration-responsive element-binding protein 1I (251 aa).

Residues 1–50 (MCTSKLEEITGEWPPPALQAASTTSSSEPCRRLSPPSSKRPAGRTKFHET) are disordered. The segment at residues 54–114 (VFRGVRRRGR…GRAAACLNFA (61 aa)) is a DNA-binding region (AP2/ERF). The disordered stretch occupies residues 169 to 198 (ATSEPSAASDDDAVTSSSSTTDADEEASPF).

This sequence belongs to the AP2/ERF transcription factor family. ERF subfamily.

The protein resides in the nucleus. Transcriptional activator that binds specifically to the DNA sequence 5'-[AG]CCGAC-3'. Binding to the C-repeat/DRE element mediates high salinity- and dehydration-inducible transcription. The sequence is that of Dehydration-responsive element-binding protein 1I (DREB1I) from Oryza sativa subsp. japonica (Rice).